Here is a 465-residue protein sequence, read N- to C-terminus: Pancreatic triacylglycerol lipase (465 aa).

An N-terminal signal peptide occupies residues 1-16 (MLPLWTLSLLLGAVAG). Disulfide bonds link cysteine 20/cysteine 26 and cysteine 107/cysteine 118. Residue serine 169 is the Nucleophile of the active site. Asparagine 183 carries an N-linked (GlcNAc...) asparagine glycan. Aspartate 193 serves as the catalytic Charge relay system. Ca(2+) contacts are provided by glutamate 204, arginine 207, aspartate 209, and aspartate 212. Residues cysteine 254 and cysteine 278 are joined by a disulfide bond. Residue histidine 280 is the Charge relay system of the active site. Cystine bridges form between cysteine 302–cysteine 313, cysteine 316–cysteine 321, and cysteine 449–cysteine 465. A PLAT domain is found at 355–465 (WRYKVSVTLS…EEVLLTLTPC (111 aa)).

Belongs to the AB hydrolase superfamily. Lipase family. In terms of assembly, forms a 1:1 stoichiometric complex with (pro)colipase/CLPS.

The protein localises to the secreted. It catalyses the reaction a triacylglycerol + H2O = a diacylglycerol + a fatty acid + H(+). The catalysed reaction is 1,2,3-tributanoylglycerol + H2O = dibutanoylglycerol + butanoate + H(+). The enzyme catalyses 1,2,3-tri-(9Z-octadecenoyl)-glycerol + H2O = di-(9Z)-octadecenoylglycerol + (9Z)-octadecenoate + H(+). It carries out the reaction all-trans-retinyl hexadecanoate + H2O = all-trans-retinol + hexadecanoate + H(+). It catalyses the reaction 1,2-di-(9Z-octadecenoyl)-glycerol + H2O = (9Z-octadecenoyl)-glycerol + (9Z)-octadecenoate + H(+). Inhibited by bile salts, is reactivated by (pro)colipase/CLPS. Plays an important role in fat metabolism. It preferentially splits the esters of long-chain fatty acids at positions 1 and 3, producing mainly 2-monoacylglycerol and free fatty acids, and shows considerably higher activity against insoluble emulsified substrates than against soluble ones. The protein is Pancreatic triacylglycerol lipase of Homo sapiens (Human).